Here is a 206-residue protein sequence, read N- to C-terminus: Small ribosomal subunit protein eS8 (206 aa).

Residues 1–37 (MGISRDSRHKRSATGAKRAQFRKKRKFELGRQPANTK) are disordered.

The protein belongs to the eukaryotic ribosomal protein eS8 family. As to quaternary structure, component of the small ribosomal subunit. Mature ribosomes consist of a small (40S) and a large (60S) subunit. The 40S subunit contains about 32 different proteins and 1 molecule of RNA (18S). The 60S subunit contains 45 different proteins and 3 molecules of RNA (25S, 5.8S and 5S).

It localises to the cytoplasm. Functionally, component of the ribosome, a large ribonucleoprotein complex responsible for the synthesis of proteins in the cell. The small ribosomal subunit (SSU) binds messenger RNAs (mRNAs) and translates the encoded message by selecting cognate aminoacyl-transfer RNA (tRNA) molecules. The large subunit (LSU) contains the ribosomal catalytic site termed the peptidyl transferase center (PTC), which catalyzes the formation of peptide bonds, thereby polymerizing the amino acids delivered by tRNAs into a polypeptide chain. The nascent polypeptides leave the ribosome through a tunnel in the LSU and interact with protein factors that function in enzymatic processing, targeting, and the membrane insertion of nascent chains at the exit of the ribosomal tunnel. In Candida albicans (strain SC5314 / ATCC MYA-2876) (Yeast), this protein is Small ribosomal subunit protein eS8 (RPS8A).